A 457-amino-acid polypeptide reads, in one-letter code: Argininosuccinate lyase (457 aa).

It belongs to the lyase 1 family. Argininosuccinate lyase subfamily.

The protein localises to the cytoplasm. It catalyses the reaction 2-(N(omega)-L-arginino)succinate = fumarate + L-arginine. The protein operates within amino-acid biosynthesis; L-arginine biosynthesis; L-arginine from L-ornithine and carbamoyl phosphate: step 3/3. The sequence is that of Argininosuccinate lyase from Shigella sonnei (strain Ss046).